We begin with the raw amino-acid sequence, 192 residues long: MGLEAVVNEIREKGRKEVETIRAETRTDVEEILVDAQTRAAGIKASAQEEADRAVTHIINQEASAANLVVKRQVLNAQKTLLDQVYSASLAAVGDLPAEFQEKALTALLKRAVKEIKKGVVHANERDSPVVEEILSQLKMFSGYTMGAPVDIPGGIIVESNDGELQIDYSYRTFLDEIWESGLKDASDILFT.

Belongs to the V-ATPase E subunit family. In terms of assembly, has multiple subunits with at least A(3), B(3), C, D, E, F, H, I and proteolipid K(x).

Its subcellular location is the cell membrane. Functionally, component of the A-type ATP synthase that produces ATP from ADP in the presence of a proton gradient across the membrane. The protein is A-type ATP synthase subunit E of Methanoculleus marisnigri (strain ATCC 35101 / DSM 1498 / JR1).